Here is a 138-residue protein sequence, read N- to C-terminus: Protein FAM136A (138 aa).

The protein belongs to the FAM136 family.

The polypeptide is Protein FAM136A (fam136a) (Xenopus tropicalis (Western clawed frog)).